Reading from the N-terminus, the 216-residue chain is Gas vesicle protein H (216 aa).

A disordered region spans residues 1–141 (MSPNLNGPGG…IHIETRETDD (141 aa)). Over residues 15 to 25 (DRPDEPDDSDR) the composition is skewed to acidic residues. Basic and acidic residues-rich tracts occupy residues 38–51 (PDDR…RPSD), 73–84 (DGHRQGHGRIDR), and 107–141 (KPSD…ETDD).

This sequence belongs to the gas vesicle GvpH family. GvpF to GvpM interact with each other in vitro, and may form multi-subunit complex(es). Interacts with GvpC. Might interact with GvpA.

It localises to the gas vesicle. Functionally, proteins GvpF to GvpM might be involved in nucleating gas vesicle formation. A minor component of the gas vesicle. Gas vesicles are hollow, gas filled proteinaceous nanostructures found in some microorganisms. They allow positioning of halobacteria at the optimal depth for growth in the poorly aerated, shallow brine pools of their habitat. In terms of biological role, expression of a 9.5 kb mc-vac DNA fragment containing 2 divergently transcribed regions (gvpD-gvpE-gvpF-gvpG-gvpH-gvpI-gvpJ-gvpK-gvpL-gvpM and gvpA-gvpC-gvpN-gvpO) allows H.volcanii to produce gas vesicles. In Haloferax mediterranei (strain ATCC 33500 / DSM 1411 / JCM 8866 / NBRC 14739 / NCIMB 2177 / R-4) (Halobacterium mediterranei), this protein is Gas vesicle protein H.